A 229-amino-acid chain; its full sequence is Potassium/proton antiporter CemA (229 aa).

3 consecutive transmembrane segments (helical) span residues 6–26, 107–127, and 189–209; these read AFIPFFYFTSIVFLPWLISLC, ILHFSTNLISFVILSGYSFWG, and ILSGLVSTFPVILDTIFKYWI.

The protein belongs to the CemA family.

The protein resides in the plastid. It is found in the chloroplast inner membrane. The catalysed reaction is K(+)(in) + H(+)(out) = K(+)(out) + H(+)(in). Its function is as follows. Contributes to K(+)/H(+) antiport activity by supporting proton efflux to control proton extrusion and homeostasis in chloroplasts in a light-dependent manner to modulate photosynthesis. Prevents excessive induction of non-photochemical quenching (NPQ) under continuous-light conditions. Indirectly promotes efficient inorganic carbon uptake into chloroplasts. This Nasturtium officinale (Watercress) protein is Potassium/proton antiporter CemA.